Here is a 77-residue protein sequence, read N- to C-terminus: Acyl carrier protein (77 aa).

The 76-residue stretch at 2-77 (ASIEKRIKEI…DAIDYITDHT (76 aa)) folds into the Carrier domain. Ser37 carries the post-translational modification O-(pantetheine 4'-phosphoryl)serine.

This sequence belongs to the acyl carrier protein (ACP) family. Post-translationally, 4'-phosphopantetheine is transferred from CoA to a specific serine of apo-ACP by AcpS. This modification is essential for activity because fatty acids are bound in thioester linkage to the sulfhydryl of the prosthetic group.

Its subcellular location is the cytoplasm. The protein operates within lipid metabolism; fatty acid biosynthesis. Functionally, carrier of the growing fatty acid chain in fatty acid biosynthesis. This Geobacter sp. (strain M21) protein is Acyl carrier protein.